The following is a 350-amino-acid chain: MAMRQTPLTCSGHTRPVVDLAFSGITPYGYFLISACKDGKPMLRQGDTGDWIGTFLGHKGAVWGATLNKDATKAATAAADFTAKVWDAVSGDELMTLAHKHIVKTVDFTQDSNYLLTGGQDKLLRIYDLNKPEAEPKEISGHTSGIKKALWCSDDKQILSADDKTVRLWDHATMTEVKSLNFNMSVSSMEYIPEGEILVITYGRSIAFHSAVSLEPIKSFEAPATINSASLHPEKEFLVAGGEDFKLYKYDYNSGEELESYKGHFGPIHCVRFSPDGELYASGSEDGTLRLWQTVVGKTYGLWKCVLPEEDSGELAKPKIGFPETAEEELEEIASENSDSIYSSTPEVKA.

7 WD repeats span residues 12–56 (GHTR…GTFL), 57–96 (GHKG…ELMT), 98–137 (AHKH…AEPK), 141–179 (GHTS…EVKS), 180–212 (LNFN…HSAV), 221–262 (EAPA…ESYK), and 263–302 (GHFG…TYGL). Phosphoserine is present on residues Ser312, Ser335, and Ser338. Residues 326–350 (AEEELEEIASENSDSIYSSTPEVKA) are disordered. Over residues 337–350 (NSDSIYSSTPEVKA) the composition is skewed to polar residues. Tyr342 carries the post-translational modification Phosphotyrosine.

It belongs to the WD repeat STRAP family. In terms of assembly, part of the core SMN complex that contains SMN1, GEMIN2/SIP1, DDX20/GEMIN3, GEMIN4, GEMIN5, GEMIN6, GEMIN7, GEMIN8 and STRAP/UNRIP. Part of the SMN-Sm complex that contains SMN1, GEMIN2/SIP1, DDX20/GEMIN3, GEMIN4, GEMIN5, GEMIN6, GEMIN7, GEMIN8, STRAP/UNRIP and the Sm proteins SNRPB, SNRPD1, SNRPD2, SNRPD3, SNRPE, SNRPF and SNRPG. Interacts directly with GEMIN6 and GEMIN7. Associates with the SMN complex in the cytoplasm but not in the nucleus. Also interacts with CSDE1/UNR and MAWBP. Interacts with PDPK1. Interacts with TRIM48.

The protein resides in the cytoplasm. It is found in the nucleus. The SMN complex catalyzes the assembly of small nuclear ribonucleoproteins (snRNPs), the building blocks of the spliceosome, and thereby plays an important role in the splicing of cellular pre-mRNAs. Most spliceosomal snRNPs contain a common set of Sm proteins SNRPB, SNRPD1, SNRPD2, SNRPD3, SNRPE, SNRPF and SNRPG that assemble in a heptameric protein ring on the Sm site of the small nuclear RNA to form the core snRNP (Sm core). In the cytosol, the Sm proteins SNRPD1, SNRPD2, SNRPE, SNRPF and SNRPG are trapped in an inactive 6S pICln-Sm complex by the chaperone CLNS1A that controls the assembly of the core snRNP. To assemble core snRNPs, the SMN complex accepts the trapped 5Sm proteins from CLNS1A forming an intermediate. Binding of snRNA inside 5Sm triggers eviction of the SMN complex, thereby allowing binding of SNRPD3 and SNRPB to complete assembly of the core snRNP. STRAP plays a role in the cellular distribution of the SMN complex. Negatively regulates TGF-beta signaling but positively regulates the PDPK1 kinase activity by enhancing its autophosphorylation and by significantly reducing the association of PDPK1 with 14-3-3 protein. The sequence is that of Serine-threonine kinase receptor-associated protein (Strap) from Mus musculus (Mouse).